A 1270-amino-acid chain; its full sequence is Vigilin (1270 aa).

The span at methionine 1 to serine 11 shows a compositional bias: polar residues. Disordered stretches follow at residues methionine 1 to glutamine 23 and alanine 28 to leucine 47. KH domains follow at residues alanine 150–proline 188, aspartate 219–proline 260, lysine 291–threonine 333, alanine 360–glutamate 402, isoleucine 431–aspartate 473, glutamate 504–aspartate 545, valine 577–arginine 619, alanine 651–glutamate 693, glutamine 724–serine 766, aspartate 798–valine 840, and glutamate 872–arginine 913. Residues proline 911–arginine 947 form a disordered region. Over residues glycine 933–arginine 947 the composition is skewed to basic and acidic residues. 3 KH domains span residues alanine 970–proline 1012, alanine 1051–lysine 1093, and leucine 1126–serine 1168. Residues serine 1217–arginine 1270 form a disordered region.

It localises to the cytoplasm. The protein is Vigilin (HDLBP) of Gallus gallus (Chicken).